We begin with the raw amino-acid sequence, 94 residues long: Co-chaperonin GroES (94 aa).

The protein belongs to the GroES chaperonin family. As to quaternary structure, heptamer of 7 subunits arranged in a ring. Interacts with the chaperonin GroEL.

Its subcellular location is the cytoplasm. Together with the chaperonin GroEL, plays an essential role in assisting protein folding. The GroEL-GroES system forms a nano-cage that allows encapsulation of the non-native substrate proteins and provides a physical environment optimized to promote and accelerate protein folding. GroES binds to the apical surface of the GroEL ring, thereby capping the opening of the GroEL channel. The protein is Co-chaperonin GroES of Streptococcus pneumoniae (strain 70585).